The following is a 271-amino-acid chain: Peroxisomal biogenesis factor 2 (271 aa).

At 1-2 the chain is on the peroxisomal matrix side; it reads MS. Residues 3–29 form a helical membrane-spanning segment; it reads RVAQLDSIALDKELYGQFWSEFNAAFN. The Cytoplasmic segment spans residues 30 to 33; sequence TSEH. A helical transmembrane segment spans residues 34–60; sequence KEEWELALNTVVFMCATRFLPHYGSSC. Topologically, residues 61–77 are peroxisomal matrix; it reads TYGSALSGVVFQCRKRT. A helical membrane pass occupies residues 78 to 97; the sequence is LYVVTVLAGYVWKKITHIIF. Residues 98 to 101 lie on the Cytoplasmic side of the membrane; it reads NGPH. Residues 102–133 traverse the membrane as a helical segment; it reads CGNQMMWLKLYKWVNLLYHGCDVTNFLRFLAA. At 134–175 the chain is on the peroxisomal matrix side; that stretch reads EGPNARAFLSPLYRAFNVHSTRLIRDGSAIASEFYSNSVFAG. The helical transmembrane segment at 176 to 197 threads the bilayer; that stretch reads LEYQNRQLLWNALLELFSNTLL. Over 198–271 the chain is Cytoplasmic; it reads TKRGLLTFVK…SGRLTASPVY (74 aa). Zn(2+) is bound by residues Cys222, Cys225, Cys237, Cys238, Cys243, Cys246, Cys256, and Cys259. Residues 222 to 259 form an RING-type zinc finger; the sequence is CPRCGGFPTNPYQIACCRANYCYVCVVKALEWSMCDAC.

It belongs to the pex2/pex10/pex12 family. Component of the PEX2-PEX10-PEX12 retrotranslocation channel, composed of PEX2, PEX10 and PEX12.

It localises to the peroxisome membrane. The catalysed reaction is [E2 ubiquitin-conjugating enzyme]-S-ubiquitinyl-L-cysteine + [acceptor protein]-L-cysteine = [E2 ubiquitin-conjugating enzyme]-L-cysteine + [acceptor protein]-S-ubiquitinyl-L-cysteine.. Its pathway is protein modification; protein ubiquitination. E3 ubiquitin-protein ligase component of a retrotranslocation channel required for peroxisome organization by mediating export of the PEX5 receptor from peroxisomes to the cytosol, thereby promoting PEX5 recycling. The retrotranslocation channel is composed of PEX2, PEX10 and PEX12; each subunit contributing transmembrane segments that coassemble into an open channel that specifically allows the passage of PEX5 through the peroxisomal membrane. PEX2 also regulates peroxisome organization by acting as a E3 ubiquitin-protein ligase. PEX2 ubiquitinates PEX5 during its passage through the retrotranslocation channel: catalyzes monoubiquitination of PEX5 at 'Cys-6', a modification that acts as a signal for PEX5 extraction into the cytosol. This is Peroxisomal biogenesis factor 2 from Saccharomyces cerevisiae (strain ATCC 204508 / S288c) (Baker's yeast).